We begin with the raw amino-acid sequence, 127 residues long: Protein ApaG (127 aa).

The ApaG domain occupies N3–H127.

The polypeptide is Protein ApaG (Nitrosomonas eutropha (strain DSM 101675 / C91 / Nm57)).